We begin with the raw amino-acid sequence, 681 residues long: Potassium-transporting ATPase ATP-binding subunit (681 aa).

4 helical membrane passes run 30 to 50, 59 to 79, 216 to 236, and 255 to 275; these read LLVY…FFGI, LAIA…EAIA, ILLV…LPFT, and IALL…SIGI. The active-site 4-aspartylphosphate intermediate is the Asp-306. ATP contacts are provided by residues Asp-343, Glu-347, 376-383, and Lys-394; that span reads FTATTRMS. Mg(2+) is bound by residues Asp-517 and Asp-521. 3 consecutive transmembrane segments (helical) span residues 587-607, 615-635, and 661-681; these read FAII…LNLM, AILS…PLSL, and LIAP…LGIV.

This sequence belongs to the cation transport ATPase (P-type) (TC 3.A.3) family. Type IA subfamily. As to quaternary structure, the system is composed of three essential subunits: KdpA, KdpB and KdpC.

It is found in the cell membrane. The catalysed reaction is K(+)(out) + ATP + H2O = K(+)(in) + ADP + phosphate + H(+). Part of the high-affinity ATP-driven potassium transport (or Kdp) system, which catalyzes the hydrolysis of ATP coupled with the electrogenic transport of potassium into the cytoplasm. This subunit is responsible for energy coupling to the transport system and for the release of the potassium ions to the cytoplasm. This is Potassium-transporting ATPase ATP-binding subunit from Listeria monocytogenes serovar 1/2a (strain ATCC BAA-679 / EGD-e).